We begin with the raw amino-acid sequence, 100 residues long: Urease subunit gamma (100 aa).

It belongs to the urease gamma subunit family. In terms of assembly, heterotrimer of UreA (gamma), UreB (beta) and UreC (alpha) subunits. Three heterotrimers associate to form the active enzyme.

The protein localises to the cytoplasm. The catalysed reaction is urea + 2 H2O + H(+) = hydrogencarbonate + 2 NH4(+). It participates in nitrogen metabolism; urea degradation; CO(2) and NH(3) from urea (urease route): step 1/1. This chain is Urease subunit gamma, found in Lysinibacillus sphaericus (strain C3-41).